The chain runs to 410 residues: Argininosuccinate synthase (410 aa).

ATP is bound at residue A8–S16. Y86 serves as a coordination point for L-citrulline. G116 contributes to the ATP binding site. L-aspartate-binding residues include T118, N122, and D123. N122 is a binding site for L-citrulline. Positions 126, 174, 259, and 271 each coordinate L-citrulline.

This sequence belongs to the argininosuccinate synthase family. Type 1 subfamily. As to quaternary structure, homotetramer.

It is found in the cytoplasm. It carries out the reaction L-citrulline + L-aspartate + ATP = 2-(N(omega)-L-arginino)succinate + AMP + diphosphate + H(+). It functions in the pathway amino-acid biosynthesis; L-arginine biosynthesis; L-arginine from L-ornithine and carbamoyl phosphate: step 2/3. This is Argininosuccinate synthase from Leuconostoc citreum (strain KM20).